Here is a 308-residue protein sequence, read N- to C-terminus: Elongation factor Ts (308 aa).

Residues 80–83 (TDFV) are involved in Mg(2+) ion dislocation from EF-Tu.

The protein belongs to the EF-Ts family.

It localises to the cytoplasm. Its function is as follows. Associates with the EF-Tu.GDP complex and induces the exchange of GDP to GTP. It remains bound to the aminoacyl-tRNA.EF-Tu.GTP complex up to the GTP hydrolysis stage on the ribosome. This is Elongation factor Ts from Rhodopseudomonas palustris (strain BisB18).